The primary structure comprises 344 residues: Biotin synthase (344 aa).

Positions 40–267 (AEVQVSTLLS…KSMVRLSAGR (228 aa)) constitute a Radical SAM core domain. [4Fe-4S] cluster-binding residues include Cys55, Cys59, and Cys62. Positions 99, 130, 190, and 262 each coordinate [2Fe-2S] cluster.

The protein belongs to the radical SAM superfamily. Biotin synthase family. As to quaternary structure, homodimer. The cofactor is [4Fe-4S] cluster. [2Fe-2S] cluster serves as cofactor.

It carries out the reaction (4R,5S)-dethiobiotin + (sulfur carrier)-SH + 2 reduced [2Fe-2S]-[ferredoxin] + 2 S-adenosyl-L-methionine = (sulfur carrier)-H + biotin + 2 5'-deoxyadenosine + 2 L-methionine + 2 oxidized [2Fe-2S]-[ferredoxin]. The protein operates within cofactor biosynthesis; biotin biosynthesis; biotin from 7,8-diaminononanoate: step 2/2. Catalyzes the conversion of dethiobiotin (DTB) to biotin by the insertion of a sulfur atom into dethiobiotin via a radical-based mechanism. The chain is Biotin synthase from Xanthomonas oryzae pv. oryzae (strain PXO99A).